The sequence spans 442 residues: CAAX prenyl protease 1 homolog (442 aa).

Over 1-62 (MDASCLFKAL…KARDYKIDNH (62 aa)) the chain is Lumenal. The helical transmembrane segment at 63 to 83 (LFGFFHSWFNQLLLTAQLIGG) threads the bilayer. A topological domain (cytoplasmic) is located at residue tyrosine 84. Residues 85 to 105 (YPFLWYATASYPLHVAVFLSI) traverse the membrane as a helical segment. Residues 106–146 (NSIIETIIDLPWDLYSTFIIEDAHGFNKQTIGFYFVDKIKK) lie on the Lumenal side of the membrane. Residues 147–167 (MLVGFALTMPIVYGIEWIIVN) form a helical membrane-spanning segment. At 168–170 (GGP) the chain is on the cytoplasmic side. Residues 171–191 (YFFVYIWLFVSVVVLLLMTIY) traverse the membrane as a helical segment. At 192 to 311 (PTFIAPLFDK…ELGHWALWHT (120 aa)) the chain is on the lumenal side. Position 301 (histidine 301) interacts with Zn(2+). Glutamate 302 is a catalytic residue. Histidine 305 contributes to the Zn(2+) binding site. A helical transmembrane segment spans residues 312–332 (LINLVITEVNLFFSFAVFGYF). At 333 to 349 (YKWEALYQGFGYHDTPP) the chain is on the cytoplasmic side. Residues 350–370 (VIGMMLIFQFVLALYNQLASI) traverse the membrane as a helical segment. Topologically, residues 371-442 (GMVIHSRSAE…AVRAFQAKNK (72 aa)) are lumenal. Glutamate 380 contributes to the Zn(2+) binding site. Aspartate 384 acts as the Proton donor in catalysis.

Belongs to the peptidase M48A family. Zn(2+) is required as a cofactor.

The protein localises to the endoplasmic reticulum membrane. Its subcellular location is the membrane. It catalyses the reaction Hydrolyzes the peptide bond -P2-(S-farnesyl or geranylgeranyl)C-P1'-P2'-P3'-COOH where P1' and P2' are amino acids with aliphatic side chains and P3' is any C-terminal residue.. Proteolytically removes the C-terminal three residues of farnesylated proteins. The polypeptide is CAAX prenyl protease 1 homolog (Caenorhabditis elegans).